Reading from the N-terminus, the 834-residue chain is Pentatricopeptide repeat-containing protein At4g39530 (834 aa).

PPR repeat units lie at residues 78-112, 113-144, 145-181, 182-212, 213-247, 248-282, 283-313, 314-348, 349-383, 384-414, 415-452, 453-487, 488-518, 519-553, 554-588, 589-619, 620-654, 655-689, and 690-720; these read DTYL…NLVS, WSTM…KDSP, NEYI…GFDR, DVYV…LPEK, STVT…NVVP, DGYI…GLEM, DASL…MPNK, NIIS…GLKP, DMYA…NLGN, DSYV…FAAA, DVVL…LIRP, SLLT…GLNL, DIFA…MKVK, DLVI…RERP, DEFT…GLEC, NPYI…AASR, DVVC…GIEP, NYIT…GIEP, and ETEH…MPTK. A type E motif region spans residues 725–800; the sequence is VWRSLLSGCA…EPGRSWIGIN (76 aa). Residues 801–831 form a type E(+) motif region; it reads KEVHIFLSKDKSHCKANQIYEVLDDLLVQIR.

The protein belongs to the PPR family. PCMP-E subfamily.

The protein is Pentatricopeptide repeat-containing protein At4g39530 (PCMP-E52) of Arabidopsis thaliana (Mouse-ear cress).